A 199-amino-acid polypeptide reads, in one-letter code: MARCKS-related protein (199 aa).

The interval Met-1–Glu-199 is disordered. A lipid anchor (N-myristoyl glycine) is attached at Gly-2. Position 14 is a phosphothreonine (Thr-14). Residues Glu-16–Ala-26 show a composition bias toward low complexity. A phosphoserine mark is found at Ser-22, Ser-36, and Ser-48. Positions Gly-53–Ala-64 are enriched in low complexity. Position 71 is a phosphoserine (Ser-71). Residues Ala-76–Thr-85 are compositionally biased toward basic and acidic residues. Phosphothreonine is present on Thr-85. The span at Pro-86 to Phe-98 shows a compositional bias: basic residues. An effector domain involved in lipid-binding and calmodulin-binding region spans residues Lys-87–Lys-110. Ser-93, Ser-101, and Ser-104 each carry phosphoserine; by PKC. Ser-119 carries the phosphoserine modification. Ser-120 is modified (phosphoserine; by MAPK8). Phosphoserine is present on Ser-135. Position 148 is a phosphothreonine; by MAPK8 (Thr-148). Residue Ser-151 is modified to Phosphoserine. A compositionally biased stretch (low complexity) spans Ala-156 to Gly-167. Position 170 is a phosphothreonine (Thr-170). Over residues Ser-181–Glu-199 the composition is skewed to low complexity. Thr-182 carries the phosphothreonine; by MAPK8 modification. Thr-191 carries the phosphothreonine modification.

It belongs to the MARCKS family. In terms of assembly, binds to filamentous actin (F-actin), but not to monomeric G-actin, independently of its phosphorylation status. Interacts with calmodulin. Phosphorylated. Phosphorylation at Ser-120 and Thr-182 is non-redundantly catalyzed by MAPK8 in vivo. Phosphorylation at Thr-148 is preferentially catalyzed by MAPK8 in vivo, but this modification can also be catalyzed by other kinases in the absence of MAPK8. May be phosphorylated by protein kinase C, which disrupts the interaction with calmodulin.

Its subcellular location is the cytoplasm. The protein localises to the cytoskeleton. It is found in the cell membrane. In terms of biological role, controls cell movement by regulating actin cytoskeleton homeostasis and filopodium and lamellipodium formation. When unphosphorylated, induces cell migration. When phosphorylated by MAPK8, induces actin bundles formation and stabilization, thereby reducing actin plasticity, hence restricting cell movement, including neuronal migration. May be involved in coupling the protein kinase C and calmodulin signal transduction systems. The protein is MARCKS-related protein (MARCKSL1) of Oryctolagus cuniculus (Rabbit).